The following is a 599-amino-acid chain: Endoribonuclease ZC3H12A (599 aa).

A disordered region spans residues 1-40 (MSGPCGEKPVLEASPTMSLWEFEDSHSRQGTPRPGQELAA). Residues 42-87 (EASALELQMKVDFFRKLGYSSTEIHSVLQKLGVQADTNTVLGELVK) are ubiquitin association domain. Residues 81–150 (VLGELVKHGT…DGSNVAMSHG (70 aa)) form a necessary for interaction with TANK region. Positions 90–133 (TATERERQTSPDPCPQLPLVPRGGGTPKAPNLEPPLPEEEKEGS) are disordered. The residue at position 99 (Ser-99) is a Phosphoserine. Residues 112–297 (GGGTPKAPNL…LDNFLRKKPL (186 aa)) form an RNase region. In terms of domain architecture, RNase NYN spans 135 to 290 (LRPVVIDGSN…LGRHGPSLDN (156 aa)). The RNA binding stretch occupies residues 214–220 (RRVGGKR). Residue Asp-226 participates in Mg(2+) binding. The segment at 301 to 324 (HRKQPCPYGRKCTYGIKCRFFHPE) adopts a C3H1-type zinc-finger fold. Positions 301–457 (HRKQPCPYGR…SELWGVRGGG (157 aa)) are necessary for interaction with ZC3H12D. The interval 343 to 420 (LSPPRAPSKD…SGSSFGPTDW (78 aa)) is disordered. Phosphoserine is present on Ser-344. Residues 358-375 (PSPSSQSSSLLTESEQCS) are compositionally biased toward low complexity. Over residues 386 to 399 (SPGSRQEGLTQTYA) the composition is skewed to polar residues. Residues Ser-438 and Ser-442 each carry the phosphoserine modification. The tract at residues 522–546 (PPPTSVLQEPPVQSPGAGRSPWGRA) is disordered.

Belongs to the ZC3H12 family. In terms of assembly, oligomer. Found in a deubiquitination complex with TANK, USP10 and ZC3H12A; this complex inhibits genotoxic stress- or interleukin-1-beta-mediated NF-kappaB activation by promoting IKBKG or TRAF6 deubiquitination. Interacts with IKBKG; this interaction increases in response to DNA damage. Interacts with TANK; this interaction increases in response to DNA damage and serves as a bridge to anchor both TANK and USP10 into a deubiquitinating complex. Interacts with TRAF6; this interaction increases in response to DNA damage and is stimulated by TANK. Interacts with USP10; this interaction increases in response to DNA damage and serves as a bridge to anchor both TANK and USP10 into a deubiquitinating complex. Interacts with ZC3H12D. Interacts with TNRC6A. Interacts with IKBKB/IKKB. Interacts with IKBKB/IKKB. Interacts with BTRC; the interaction occurs when ZC3H12A is phosphorylated in a IKBKB/IKKB-dependent manner. Interacts with IRAK1; this interaction increases the interaction between ZC3H12A and IKBKB/IKKB. Interacts with UPF1; this interaction occurs in a mRNA translationally active- and termination-dependent manner and is essential for ZC3H12A-mediated degradation of target mRNAs. Associates with ribosomes. Interacts with ubiquitin. (Microbial infection) Oligomerization is necessary for antiviral activity. Requires Mg(2+) as cofactor. Phosphorylated by IRAK1; phosphorylation is necessary for subsequent phosphorylation by the I-kappa-B-kinase (IKK) complex. Phosphorylated by I-kappa-B-kinase (IKK) subunits IKBKB/IKKB and CHUK/IKKA at Ser-438 and Ser-442; these phosphorylations promote ubiquitin proteasome-mediated degradation of ZC3H12A and hence facilitates rapid and robust production of IL-6 mRNA in response to toll-like receptor (TLR) or IL-1 receptor stimuli. Post-translationally, (Microbial infection) Rapidly degraded in activated T-cells in response to phorbol 13-acetate 12-myristate (PMA) during HIV-1 viral infection. In terms of processing, ubiquitinated; ubiquitination is induced in response to interleukin IL1 receptor stimuli in a IKBKB/IKKB and IRAK1-dependent manner, leading to proteasome-mediated degradation. Proteolytically cleaved between Arg-111 and Arg-214 by MALT1 in activated T-cells; cleavage at Arg-111 is critical for promoting ZC3H12A degradation in response to T-cell receptor (TCR) stimulation, and hence is necessary for prolonging the stability of a set of mRNAs controlling T-cell activation and Th17 cell differentiation. In terms of tissue distribution, expressed in heart, placenta, spleen, kidney, liver and lung. Expressed in leukocytes. Expressed in monocyte.

Its subcellular location is the nucleus. It is found in the cytoplasm. The protein localises to the P-body. It localises to the rough endoplasmic reticulum membrane. The protein resides in the cytoplasmic granule. Functionally, endoribonuclease involved in various biological functions such as cellular inflammatory response and immune homeostasis, glial differentiation of neuroprogenitor cells, cell death of cardiomyocytes, adipogenesis and angiogenesis. Functions as an endoribonuclease involved in mRNA decay. Modulates the inflammatory response by promoting the degradation of a set of translationally active cytokine-induced inflammation-related mRNAs, such as IL6 and IL12B, during the early phase of inflammation. Prevents aberrant T-cell-mediated immune reaction by degradation of multiple mRNAs controlling T-cell activation, such as those encoding cytokines (IL6 and IL2), cell surface receptors (ICOS, TNFRSF4 and TNFR2) and transcription factor (REL). Inhibits cooperatively with ZC3H12A the differentiation of helper T cells Th17 in lungs. They repress target mRNA encoding the Th17 cell-promoting factors IL6, ICOS, REL, IRF4, NFKBID and NFKBIZ. The cooperation requires RNA-binding by RC3H1 and the nuclease activity of ZC3H12A. Together with RC3H1, destabilizes TNFRSF4/OX40 mRNA by binding to the conserved stem loop structure in its 3'UTR. Self regulates by destabilizing its own mRNA. Cleaves mRNA harboring a stem-loop (SL), often located in their 3'-UTRs, during the early phase of inflammation in a helicase UPF1-dependent manner. Plays a role in the inhibition of microRNAs (miRNAs) biogenesis. Cleaves the terminal loop of a set of precursor miRNAs (pre-miRNAs) important for the regulation of the inflammatory response leading to their degradation, and thus preventing the biosynthesis of mature miRNAs. Also plays a role in promoting angiogenesis in response to inflammatory cytokines by inhibiting the production of antiangiogenic microRNAs via its anti-dicer RNase activity. Affects the overall ubiquitination of cellular proteins. Positively regulates deubiquitinase activity promoting the cleavage at 'Lys-48'- and 'Lys-63'-linked polyubiquitin chains on TNF receptor-associated factors (TRAFs), preventing JNK and NF-kappa-B signaling pathway activation, and hence negatively regulating macrophage-mediated inflammatory response and immune homeostasis. Also induces deubiquitination of the transcription factor HIF1A, probably leading to its stabilization and nuclear import, thereby positively regulating the expression of proangiogenic HIF1A-targeted genes. Involved in a TANK-dependent negative feedback response to attenuate NF-kappaB activation through the deubiquitination of IKBKG or TRAF6 in response to interleukin-1-beta (IL1B) stimulation or upon DNA damage. Prevents stress granule (SGs) formation and promotes macrophage apoptosis under stress conditions, including arsenite-induced oxidative stress, heat shock and energy deprivation. Plays a role in the regulation of macrophage polarization; promotes IL4-induced polarization of macrophages M1 into anti-inflammatory M2 state. May also act as a transcription factor that regulates the expression of multiple genes involved in inflammatory response, angiogenesis, adipogenesis and apoptosis. Functions as a positive regulator of glial differentiation of neuroprogenitor cells through an amyloid precursor protein (APP)-dependent signaling pathway. Attenuates septic myocardial contractile dysfunction in response to lipopolysaccharide (LPS) by reducing I-kappa-B-kinase (IKK)-mediated NF-kappa-B activation, and hence myocardial pro-inflammatory cytokine production. Its function is as follows. (Microbial infection) Binds to Japanese encephalitis virus (JEV) and Dengue virus (DEN) RNAs. In terms of biological role, (Microbial infection) Exhibits antiviral activity against HIV-1 in lymphocytes by decreasing the abundance of HIV-1 viral RNA species. This is Endoribonuclease ZC3H12A from Homo sapiens (Human).